The chain runs to 70 residues: Small ribosomal subunit protein bS21 (70 aa).

This sequence belongs to the bacterial ribosomal protein bS21 family.

The sequence is that of Small ribosomal subunit protein bS21 from Helicobacter hepaticus (strain ATCC 51449 / 3B1).